Reading from the N-terminus, the 210-residue chain is Adenylate kinase (210 aa).

10 to 15 (GSGKGT) contributes to the ATP binding site. Residues 30 to 59 (STGDLFRANISNATPLGKEIKQIVENGQLV) are NMP. AMP contacts are provided by residues threonine 31, arginine 36, 57 to 59 (QLV), 85 to 88 (GFPR), and glutamine 92. The segment at 121-158 (GRRICQSCGGIFNIYTLPTKEKGICDLCKGSLYQRKDD) is LID. ATP is bound at residue arginine 122. Cysteine 125 and cysteine 128 together coordinate Zn(2+). Position 131–132 (131–132 (IF)) interacts with ATP. Zn(2+) is bound by residues cysteine 145 and cysteine 148. AMP-binding residues include arginine 155 and arginine 166. Lysine 194 provides a ligand contact to ATP.

The protein belongs to the adenylate kinase family. As to quaternary structure, monomer.

The protein resides in the cytoplasm. The catalysed reaction is AMP + ATP = 2 ADP. Its pathway is purine metabolism; AMP biosynthesis via salvage pathway; AMP from ADP: step 1/1. Its function is as follows. Catalyzes the reversible transfer of the terminal phosphate group between ATP and AMP. Plays an important role in cellular energy homeostasis and in adenine nucleotide metabolism. The sequence is that of Adenylate kinase from Borrelia turicatae (strain 91E135).